The chain runs to 194 residues: Putative manganese efflux pump MntP (194 aa).

Helical transmembrane passes span 3–23, 37–57, 69–89, 110–132, 147–167, and 172–192; these read PFSIVLIGFAMSTDAFAAAIG, LRAGLIFGCIEAITPVIGWVL, DHWIAFVLLGALGTHMMIAGL, LGLATTGFATSIDAMAVGVSLAF, CTFSMVTAGVMLGRALGNLIG, and ILGGLILVIVGSVILYEHLGA.

It belongs to the MntP (TC 9.B.29) family.

Its subcellular location is the cell inner membrane. Its function is as follows. Probably functions as a manganese efflux pump. The protein is Putative manganese efflux pump MntP of Xanthomonas oryzae pv. oryzae (strain MAFF 311018).